Reading from the N-terminus, the 461-residue chain is PTS system sucrose-specific EIIBC component (461 aa).

In terms of domain architecture, PTS EIIB type-1 spans 4-87 (KETAKRLIEL…SKEADIEREE (84 aa)). C26 acts as the Phosphocysteine intermediate; for EIIB activity in catalysis. The PTS EIIC type-1 domain maps to 107-461 (KTLSNIFVPI…KINEDEERKK (355 aa)). 10 helical membrane-spanning segments follow: residues 112 to 132 (IFVP…LLGM), 148 to 168 (LLDM…GVSA), 178 to 198 (LGAV…WGLA), 208 to 228 (FGFD…LLAV), 248 to 268 (LLVT…IAIG), 289 to 309 (AGFV…LTGV), 329 to 349 (LLPI…AVFF), 359 to 379 (IALP…IFGV), 387 to 407 (FIAA…THVA), and 430 to 450 (LIHY…AAFV).

The protein resides in the cell membrane. It carries out the reaction N(pros)-phospho-L-histidyl-[protein](out) + sucrose = sucrose 6(G)-phosphate(in) + L-histidyl-[protein]. Functionally, the phosphoenolpyruvate-dependent sugar phosphotransferase system (sugar PTS), a major carbohydrate active transport system, catalyzes the phosphorylation of incoming sugar substrates concomitantly with their translocation across the cell membrane. This system is involved in sucrose transport. The protein is PTS system sucrose-specific EIIBC component (sacP) of Bacillus subtilis (strain 168).